Consider the following 132-residue polypeptide: Small ribosomal subunit protein eS24 (132 aa).

A disordered region spans residues 91-132; the sequence is LATHGLYEKKKTSRKQRTERQNRMKKVRSIKKASVGAAGKKN. Positions 96-112 are enriched in basic and acidic residues; that stretch reads LYEKKKTSRKQRTERQN.

This sequence belongs to the eukaryotic ribosomal protein eS24 family. As to quaternary structure, component of the small ribosomal subunit.

It localises to the cytoplasm. Its function is as follows. Component of the small ribosomal subunit. The ribosome is a large ribonucleoprotein complex responsible for the synthesis of proteins in the cell. Required for processing of pre-rRNA and maturation of 40S ribosomal subunits. The sequence is that of Small ribosomal subunit protein eS24 (rps24) from Oryzias latipes (Japanese rice fish).